The primary structure comprises 417 residues: Putative F-box protein At3g58950 (417 aa).

The 53-residue stretch at 1–53 folds into the F-box domain; that stretch reads MDLFSSLPDEVLCHILSFLTTKEAALASVVSKRWRNQFALVPNLDIDEEGKRE.

This Arabidopsis thaliana (Mouse-ear cress) protein is Putative F-box protein At3g58950.